The following is a 441-amino-acid chain: Transcriptional regulatory protein ZraR (441 aa).

Positions 7 to 121 constitute a Response regulatory domain; it reads DILVVDDDVS…RLQETLEKAL (115 aa). A 4-aspartylphosphate modification is found at Asp-56. Positions 141-370 constitute a Sigma-54 factor interaction domain; sequence MIGSSPAMQH…LENAIERAVV (230 aa). Gly-172, Thr-173, Arg-329, and Arg-359 together coordinate ATP. A DNA-binding region (H-T-H motif) is located at residues 421-440; sequence KTEAARQLGITRKTLLAKLS.

In terms of processing, phosphorylated by ZraS.

The protein resides in the cytoplasm. Its activity is regulated as follows. Activity of the ZraS/ZraR two-component system is repressed by the zinc-bound form of ZraP, which probably interacts with the periplasmic region of ZraS. Functionally, part of the Zra signaling pathway, an envelope stress response (ESR) system composed of the periplasmic accessory protein ZraP, the histidine kinase ZraS and the transcriptional regulator ZraR. The ZraPSR system contributes to antibiotic resistance and is important for membrane integrity in the presence of membrane-targeting biocides. ZraR is a member of the two-component regulatory system ZraS/ZraR. When activated by ZraS, acts in conjunction with sigma-54 to regulate the expression of zraP in the presence of high Zn(2+) or Pb(2+) concentrations. Also positively autoregulates the expression of the zraSR operon. In Salmonella typhi, this protein is Transcriptional regulatory protein ZraR (zraR).